An 86-amino-acid chain; its full sequence is Small ribosomal subunit protein bS20 (86 aa).

Positions 1 to 27 are enriched in basic residues; sequence MANSKSAKKRAIQAEKRRQHNASRRSM. The interval 1-28 is disordered; sequence MANSKSAKKRAIQAEKRRQHNASRRSMM.

It belongs to the bacterial ribosomal protein bS20 family.

Its function is as follows. Binds directly to 16S ribosomal RNA. This is Small ribosomal subunit protein bS20 from Vibrio parahaemolyticus serotype O3:K6 (strain RIMD 2210633).